A 100-amino-acid polypeptide reads, in one-letter code: NADH-quinone oxidoreductase subunit K (100 aa).

Helical transmembrane passes span 4-24 (LFHG…SLIV), 28-48 (ILFI…ALIV), and 60-80 (IMYI…LALL).

This sequence belongs to the complex I subunit 4L family. In terms of assembly, NDH-1 is composed of 13 different subunits. Subunits NuoA, H, J, K, L, M, N constitute the membrane sector of the complex.

The protein resides in the cell membrane. It carries out the reaction a quinone + NADH + 5 H(+)(in) = a quinol + NAD(+) + 4 H(+)(out). NDH-1 shuttles electrons from NADH, via FMN and iron-sulfur (Fe-S) centers, to quinones in the respiratory chain. The immediate electron acceptor for the enzyme in this species is believed to be ubiquinone. Couples the redox reaction to proton translocation (for every two electrons transferred, four hydrogen ions are translocated across the cytoplasmic membrane), and thus conserves the redox energy in a proton gradient. The sequence is that of NADH-quinone oxidoreductase subunit K from Buchnera aphidicola subsp. Acyrthosiphon pisum (strain 5A).